A 473-amino-acid polypeptide reads, in one-letter code: mRNA export factor ICP27 homolog (473 aa).

2 disordered regions span residues 57–81 (QELL…NSIY) and 123–143 (QTKR…NFPM). Zn(2+)-binding residues include cysteine 362, histidine 438, cysteine 442, and cysteine 447. The segment at 362-447 (CKYGTEKRSM…HTRRCSDPAC (86 aa)) adopts a CHC2-type zinc-finger fold.

The protein belongs to the HHV-1 ICP27 protein family. Associates in a complex with RNA, and host export factors NXF1/TAP and ALYREF; these interactions allow nuclear export of viral transcripts.

Its subcellular location is the host cytoplasm. The protein localises to the host nucleus. In terms of biological role, multifunctional regulator of the expression of viral genes that mediates nuclear export of viral intronless mRNAs. This immediate early (EI) protein promotes the nuclear export of viral intronless mRNAs by interacting with mRNAs and host NXF1/TAP. The sequence is that of mRNA export factor ICP27 homolog from Gallus gallus (Chicken).